Here is a 664-residue protein sequence, read N- to C-terminus: Sodium/glucose cotransporter 1 (664 aa).

Over 1-24 (MDSSTWSPPATATAEPLQAYERIR) the chain is Extracellular. The chain crosses the membrane as a helical span at residues 25-47 (NAADISVIVIYFVVVMAVGLWAM). Residues 48 to 66 (FSTNRGTVGGFFLAGRSMV) are Cytoplasmic-facing. The helical transmembrane segment at 67–90 (WWPIGASLFASNIGSGHFVGLAGT) threads the bilayer. Topologically, residues 91–95 (GAAAG) are extracellular. A helical membrane pass occupies residues 96 to 117 (IATGGFEWNALILVVLLGWVFV). The Cytoplasmic segment spans residues 118–139 (PIYIKAGVVTMPEYLRKRFGGQ). The helical transmembrane segment at 140-169 (RIQVYLSVLSLVLYIFTKISADIFSGAIFI) threads the bilayer. Over 170–176 (NLALGLD) the chain is Extracellular. Residues 177–193 (LYLAIFILLAITALYTI) form a helical membrane-spanning segment. Topologically, residues 194–202 (TGGLAAVIY) are cytoplasmic. Residues 203-221 (TDTLQTVIMLLGSFILTGF) form a helical membrane-spanning segment. Residues 222–275 (AFHEVGGYSAFVTKYMNAIPTVTSYGNTTVKKECYTPRADSFHIFRDPLKGDLP) are Extracellular-facing. The N-linked (GlcNAc...) asparagine glycan is linked to Asn-248. 5 cysteine pairs are disulfide-bonded: Cys-255–Cys-511, Cys-255–Cys-610, Cys-345–Cys-351, Cys-355–Cys-361, and Cys-517–Cys-522. Residues 276 to 295 (WPGLIFGLTIISLWYWCTDQ) traverse the membrane as a helical segment. The Cytoplasmic portion of the chain corresponds to 296–309 (VIVQRCLSAKNMSH). A helical transmembrane segment spans residues 310–331 (VKAGCIMCGYMKLLPMFLMVMP). Topologically, residues 332–375 (GMISRILFTEKVACTVPSECEKYCGTKVGCTNIAYPTLVVELMP) are extracellular. The chain crosses the membrane as a helical span at residues 376–406 (NGLRGLMLSVMLASLMSSLTSIFNSASTLFT). Topologically, residues 407–422 (MDIYTKIRKKASEKEL) are cytoplasmic. The helical transmembrane segment at 423-444 (MIAGRLFMLVLIGVSIAWVPIV) threads the bilayer. At 445-451 (QSAQSGQ) the chain is on the extracellular side. Residues 452–477 (LFDYIQSITSYLGPPIAAVFLLAIFC) traverse the membrane as a helical segment. Gln-457 contacts D-glucose. The Cytoplasmic segment spans residues 478–481 (KRVN). The chain crosses the membrane as a helical span at residues 482 to 504 (EPGAFWGLIIGFLIGVSRMITEF). At 505–525 (AYGTGSCMEPSNCPTIICGVH) the chain is on the extracellular side. Residues 526–547 (YLYFAIILFVITIIVILAISLF) form a helical membrane-spanning segment. Over 548–644 (TKPIADVHLY…TSEKRLWRMV (97 aa)) the chain is Cytoplasmic. The helical transmembrane segment at 645-662 (VNINGIILLAVAVFCHAY) threads the bilayer. Residues 663–664 (FA) lie on the Extracellular side of the membrane.

This sequence belongs to the sodium:solute symporter (SSF) (TC 2.A.21) family. N-glycosylation is not necessary for the cotransporter function.

It localises to the apical cell membrane. It carries out the reaction D-glucose(out) + 2 Na(+)(out) = D-glucose(in) + 2 Na(+)(in). The enzyme catalyses D-galactose(out) + 2 Na(+)(out) = D-galactose(in) + 2 Na(+)(in). With respect to regulation, enhanced by the interaction with PDZK1IP1/MAP17; but unlike SLC5A2/SGLT2, PDZK1IP1 is not essential for SLC5A1 transporter activity. Possibly modulated by cholesterol binding. Its function is as follows. Electrogenic Na(+)-coupled sugar symporter that actively transports D-glucose or D-galactose at the plasma membrane, with a Na(+) to sugar coupling ratio of 2:1. Transporter activity is driven by a transmembrane Na(+) electrochemical gradient set by the Na(+)/K(+) pump. Has a primary role in the transport of dietary monosaccharides from enterocytes to blood. Responsible for the absorption of D-glucose or D-galactose across the apical brush-border membrane of enterocytes, whereas basolateral exit is provided by GLUT2. Additionally, functions as a D-glucose sensor in enteroendocrine cells, triggering the secretion of the incretins GCG and GIP that control food intake and energy homeostasis. Together with SGLT2, functions in reabsorption of D-glucose from glomerular filtrate, playing a nonredundant role in the S3 segment of the proximal tubules. Transports D-glucose into endometrial epithelial cells, controlling glycogen synthesis and nutritional support for the embryo as well as the decidual transformation of endometrium prior to conception. Acts as a water channel enabling passive water transport in response to the osmotic gradient created upon sugar and Na(+) uptake. Has high water conductivity comparable to aquaporins and therefore is expected to play an important role in transepithelial water permeability, especially in the small intestine. This Ovis aries (Sheep) protein is Sodium/glucose cotransporter 1 (SLC5A1).